We begin with the raw amino-acid sequence, 659 residues long: MAEKIRITLIDNSEREVLQGTTTTQIAASISTSLAKKALAARFNGQMIDLSQPLLEDGRLEIITAENEAEALELVRHDYAHILAEAVQKLFPGTQITFGPVTDDGFYYDFAPKDRPFTEEDLPLIEAEMRKIIAQNNALVREVWERDKLISLWESQGEKFKAEWAKELPEGQELTIYRAGEWFDMCRGPHLPSTGKLDPKAFKLTRVSGAYWRGDQNNAMLSRIYGTGWLNAKQLKAHLERLEEAQKRDHRRLGQEMDLFHLQQEAQGSVFWHPNGYTIWLQLEAYLRRRMKNANYKEVKTPQLMDAALWEASGHWGKFRENMFVVPDEIPSTDPDKPVLSGKGNLMALKPMNCPAHIQIFKQGIRSYRELPLRMLEFGCCHRNEAHGALHGLMRVRQLTQDDAHIFCTAEQIVTETKDFVNLLDSIYRDLGFTSYAVKLSLRPELRAGDDELWDNAENGLRSALEQVGITDYEELPGEGAFYGPKLEFHLTDAIGRTWQCGTLQLDYVLPERLDASYVAEDGSRKRPVMLHRAIIGTFERFIGILIEHHAGRFPLWMAPVQAVVATIVSEADSFAESVVEKMKAAGLRVVSDIRNEKINYKIREHSLTKVPNILVVGKREAEEGKVAIRKLGSRDQIILSVDEAIALLLEEATPPDLK.

The region spanning 3-64 (EKIRITLIDN…LEDGRLEIIT (62 aa)) is the TGS domain. Positions 249–555 (DHRRLGQEMD…LIEHHAGRFP (307 aa)) are catalytic. Zn(2+) contacts are provided by C354, H405, and H532.

Belongs to the class-II aminoacyl-tRNA synthetase family. In terms of assembly, homodimer. Zn(2+) serves as cofactor.

Its subcellular location is the cytoplasm. The catalysed reaction is tRNA(Thr) + L-threonine + ATP = L-threonyl-tRNA(Thr) + AMP + diphosphate + H(+). In terms of biological role, catalyzes the attachment of threonine to tRNA(Thr) in a two-step reaction: L-threonine is first activated by ATP to form Thr-AMP and then transferred to the acceptor end of tRNA(Thr). Also edits incorrectly charged L-seryl-tRNA(Thr). This chain is Threonine--tRNA ligase, found in Zymomonas mobilis subsp. mobilis (strain ATCC 31821 / ZM4 / CP4).